Here is a 463-residue protein sequence, read N- to C-terminus: Autophagy-related protein 36 (463 aa).

The segment at Cys-5–Arg-45 adopts an RING-type; atypical zinc-finger fold. A PHD-type zinc finger spans residues Thr-85–Phe-131. Residues Thr-229–Asn-242 are compositionally biased toward polar residues. Positions Thr-229–Ile-281 are disordered. Residues Lys-255–Gly-264 show a composition bias toward basic residues.

As to quaternary structure, interacts with ATG28.

Functionally, micropexophagy-specific protein required for efficient micropexophagic apparatus (MIPA) formation but not for general autophagy. In Komagataella phaffii (strain GS115 / ATCC 20864) (Yeast), this protein is Autophagy-related protein 36 (ATG35).